The sequence spans 153 residues: Arginine repressor (153 aa).

This sequence belongs to the ArgR family.

It localises to the cytoplasm. It participates in amino-acid biosynthesis; L-arginine biosynthesis [regulation]. Its function is as follows. Regulates arginine biosynthesis genes. The polypeptide is Arginine repressor (Glaesserella parasuis serovar 5 (strain SH0165) (Haemophilus parasuis)).